Here is a 188-residue protein sequence, read N- to C-terminus: UPF0461 protein C5orf24 homolog (188 aa).

Residue serine 37 is modified to Phosphoserine. A Glycyl lysine isopeptide (Lys-Gly) (interchain with G-Cter in SUMO2) cross-link involves residue lysine 75. The segment at 79–142 (KKKKNLNRSG…GYKVSPGRPP (64 aa)) is disordered. Basic residues predominate over residues 80 to 92 (KKKNLNRSGKRGR). Positions 94–107 (SGTTKSAGYRTSTG) are enriched in polar residues. Serine 121 and serine 180 each carry phosphoserine. Lysine 184 is covalently cross-linked (Glycyl lysine isopeptide (Lys-Gly) (interchain with G-Cter in SUMO2)).

Belongs to the UPF0461 family.

The chain is UPF0461 protein C5orf24 homolog from Bos taurus (Bovine).